Consider the following 482-residue polypeptide: Membrane-bound lytic murein transglycosylase F (482 aa).

Residues 1 to 18 (MKGLFLRIITALALLFWA) form the signal peptide. The segment at 19-267 (IDMVFPWQFL…NLKEKYLGHI (249 aa)) is non-LT domain. The LT domain stretch occupies residues 268-482 (SQFDYVDTRS…NLEEIKENKD (215 aa)). The active site involves E312. The segment covering 457 to 470 (ENQTTNDNANNESA) has biased composition (polar residues). Residues 457–482 (ENQTTNDNANNESAVKNLEEIKENKD) are disordered. The span at 473 to 482 (NLEEIKENKD) shows a compositional bias: basic and acidic residues.

In the N-terminal section; belongs to the bacterial solute-binding protein 3 family. It in the C-terminal section; belongs to the transglycosylase Slt family.

The protein resides in the cell outer membrane. The catalysed reaction is Exolytic cleavage of the (1-&gt;4)-beta-glycosidic linkage between N-acetylmuramic acid (MurNAc) and N-acetylglucosamine (GlcNAc) residues in peptidoglycan, from either the reducing or the non-reducing ends of the peptidoglycan chains, with concomitant formation of a 1,6-anhydrobond in the MurNAc residue.. Its function is as follows. Murein-degrading enzyme that degrades murein glycan strands and insoluble, high-molecular weight murein sacculi, with the concomitant formation of a 1,6-anhydromuramoyl product. Lytic transglycosylases (LTs) play an integral role in the metabolism of the peptidoglycan (PG) sacculus. Their lytic action creates space within the PG sacculus to allow for its expansion as well as for the insertion of various structures such as secretion systems and flagella. The sequence is that of Membrane-bound lytic murein transglycosylase F from Haemophilus influenzae (strain 86-028NP).